The sequence spans 227 residues: UPF0173 metal-dependent hydrolase BCE_4747 (227 aa).

It belongs to the UPF0173 family.

The polypeptide is UPF0173 metal-dependent hydrolase BCE_4747 (Bacillus cereus (strain ATCC 10987 / NRS 248)).